Reading from the N-terminus, the 387-residue chain is Phosphoglycerate kinase (387 aa).

Substrate-binding positions include 21–23, Arg-36, 59–62, Arg-113, and Arg-146; these read DLN and HLGR. ATP is bound by residues Lys-197, Glu-314, and 340–343; that span reads GGDT.

It belongs to the phosphoglycerate kinase family. As to quaternary structure, monomer.

The protein resides in the cytoplasm. The catalysed reaction is (2R)-3-phosphoglycerate + ATP = (2R)-3-phospho-glyceroyl phosphate + ADP. Its pathway is carbohydrate degradation; glycolysis; pyruvate from D-glyceraldehyde 3-phosphate: step 2/5. The chain is Phosphoglycerate kinase from Pseudomonas savastanoi pv. phaseolicola (strain 1448A / Race 6) (Pseudomonas syringae pv. phaseolicola (strain 1448A / Race 6)).